A 352-amino-acid chain; its full sequence is Holliday junction branch migration complex subunit RuvB (352 aa).

Residues 13–201 (IPRSRKELRL…FGLCHKIEFY (189 aa)) are large ATPase domain (RuvB-L). Residues Leu-37, Arg-41, Gly-82, Lys-85, Thr-86, Thr-87, 148-150 (EDF), Arg-191, Tyr-201, and Arg-238 each bind ATP. Thr-86 contributes to the Mg(2+) binding site. The segment at 202–273 (SNDELKQIIF…IIEKALDSQK (72 aa)) is small ATPAse domain (RuvB-S). The segment at 276–352 (NRGLDNVDRK…KYISSNNEKY (77 aa)) is head domain (RuvB-H). DNA contacts are provided by Arg-330 and Arg-335.

Belongs to the RuvB family. Homohexamer. Forms an RuvA(8)-RuvB(12)-Holliday junction (HJ) complex. HJ DNA is sandwiched between 2 RuvA tetramers; dsDNA enters through RuvA and exits via RuvB. An RuvB hexamer assembles on each DNA strand where it exits the tetramer. Each RuvB hexamer is contacted by two RuvA subunits (via domain III) on 2 adjacent RuvB subunits; this complex drives branch migration. In the full resolvosome a probable DNA-RuvA(4)-RuvB(12)-RuvC(2) complex forms which resolves the HJ.

It is found in the cytoplasm. It carries out the reaction ATP + H2O = ADP + phosphate + H(+). Its function is as follows. The RuvA-RuvB-RuvC complex processes Holliday junction (HJ) DNA during genetic recombination and DNA repair, while the RuvA-RuvB complex plays an important role in the rescue of blocked DNA replication forks via replication fork reversal (RFR). RuvA specifically binds to HJ cruciform DNA, conferring on it an open structure. The RuvB hexamer acts as an ATP-dependent pump, pulling dsDNA into and through the RuvAB complex. RuvB forms 2 homohexamers on either side of HJ DNA bound by 1 or 2 RuvA tetramers; 4 subunits per hexamer contact DNA at a time. Coordinated motions by a converter formed by DNA-disengaged RuvB subunits stimulates ATP hydrolysis and nucleotide exchange. Immobilization of the converter enables RuvB to convert the ATP-contained energy into a lever motion, pulling 2 nucleotides of DNA out of the RuvA tetramer per ATP hydrolyzed, thus driving DNA branch migration. The RuvB motors rotate together with the DNA substrate, which together with the progressing nucleotide cycle form the mechanistic basis for DNA recombination by continuous HJ branch migration. Branch migration allows RuvC to scan DNA until it finds its consensus sequence, where it cleaves and resolves cruciform DNA. This is Holliday junction branch migration complex subunit RuvB from Prochlorococcus marinus (strain MIT 9515).